The following is an 827-amino-acid chain: Leucine--tRNA ligase (827 aa).

Residues 46 to 56 (PYPSGRIHMGH) carry the 'HIGH' region motif. The short motif at 585–589 (KMSKS) is the 'KMSKS' region element. Residue Lys588 coordinates ATP.

The protein belongs to the class-I aminoacyl-tRNA synthetase family.

The protein localises to the cytoplasm. It carries out the reaction tRNA(Leu) + L-leucine + ATP = L-leucyl-tRNA(Leu) + AMP + diphosphate. This is Leucine--tRNA ligase from Desulfotalea psychrophila (strain LSv54 / DSM 12343).